The chain runs to 421 residues: 3-phosphoshikimate 1-carboxyvinyltransferase (421 aa).

Residues Lys-21, Ser-22, and Arg-26 each contribute to the 3-phosphoshikimate site. Lys-21 contacts phosphoenolpyruvate. 2 residues coordinate phosphoenolpyruvate: Gly-93 and Arg-121. The 3-phosphoshikimate site is built by Ser-166, Ser-167, Gln-168, Ser-194, Asp-310, and Lys-337. Residue Gln-168 coordinates phosphoenolpyruvate. Asp-310 acts as the Proton acceptor in catalysis. 3 residues coordinate phosphoenolpyruvate: Arg-341, Arg-382, and Lys-407.

It belongs to the EPSP synthase family. Monomer.

The protein localises to the cytoplasm. The catalysed reaction is 3-phosphoshikimate + phosphoenolpyruvate = 5-O-(1-carboxyvinyl)-3-phosphoshikimate + phosphate. It participates in metabolic intermediate biosynthesis; chorismate biosynthesis. Its function is as follows. Catalyzes the transfer of the enolpyruvyl moiety of phosphoenolpyruvate (PEP) to the 5-hydroxyl of shikimate-3-phosphate (S3P) to produce enolpyruvyl shikimate-3-phosphate and inorganic phosphate. This Methanoregula boonei (strain DSM 21154 / JCM 14090 / 6A8) protein is 3-phosphoshikimate 1-carboxyvinyltransferase.